The following is a 500-amino-acid chain: MTIFDNYEVWFVIGSQHLYGPETLRQVTQHAEHVVNALNTEAKLPCKLVLKPLGTTPDEITAICRDANYDDRCAGLVVWLHTFSPAKMWINGLTMLNKPLLQFHTQFNAALPWDSIDMDFMNLNQTAHGGREFGFIGARMRQQHAVVTGHWQDKQAHERIGSWMRQAVSKQDTRHLKVCRFGDNMREVAVTDGDKVAAQIKFGFSVNTWAVGDLVQVVNSISDGDVNALVDEYESCYTMTPATQIHGEKRQNVLEAARIELGMKRFLEQGGFHAFTTTFEDLHGLKQLPGLAVQRLMQQGYGFAGEGDWKTAALLRIMKVMSTGLQGGTSFMEDYTYHFEKGNDLVLGSHMLEVCPSIAVEEKPILDVQHLGIGGKDDPARLIFNTQTGPAIVASLIDLGDRYRLLVNCIDTVKTPHSLPKLPVANALWKAQPDLPTASEAWILAGGAHHTVFSHALNLNDMCQFAEMHDIEITVIDNDTRLPAFKDALRWNEVYYGFRR.

4 residues coordinate Mn(2+): glutamate 306, glutamate 333, histidine 350, and histidine 450.

The protein belongs to the arabinose isomerase family. As to quaternary structure, homohexamer. Mn(2+) is required as a cofactor.

It carries out the reaction beta-L-arabinopyranose = L-ribulose. The protein operates within carbohydrate degradation; L-arabinose degradation via L-ribulose; D-xylulose 5-phosphate from L-arabinose (bacterial route): step 1/3. Catalyzes the conversion of L-arabinose to L-ribulose. This chain is L-arabinose isomerase, found in Escherichia coli (strain 55989 / EAEC).